Here is a 279-residue protein sequence, read N- to C-terminus: Biotin synthase (279 aa).

Residues 1–228 (MKDIFLCSIC…SARLMIAGGR (228 aa)) enclose the Radical SAM core domain. 3 residues coordinate [4Fe-4S] cluster: C17, C21, and C24. C61, C96, C154, and R221 together coordinate [2Fe-2S] cluster.

This sequence belongs to the radical SAM superfamily. Biotin synthase family. Homodimer. [4Fe-4S] cluster is required as a cofactor. The cofactor is [2Fe-2S] cluster.

The enzyme catalyses (4R,5S)-dethiobiotin + (sulfur carrier)-SH + 2 reduced [2Fe-2S]-[ferredoxin] + 2 S-adenosyl-L-methionine = (sulfur carrier)-H + biotin + 2 5'-deoxyadenosine + 2 L-methionine + 2 oxidized [2Fe-2S]-[ferredoxin]. It participates in cofactor biosynthesis; biotin biosynthesis; biotin from 7,8-diaminononanoate: step 2/2. Its function is as follows. Catalyzes the conversion of dethiobiotin (DTB) to biotin by the insertion of a sulfur atom into dethiobiotin via a radical-based mechanism. This chain is Biotin synthase, found in Wolinella succinogenes (strain ATCC 29543 / DSM 1740 / CCUG 13145 / JCM 31913 / LMG 7466 / NCTC 11488 / FDC 602W) (Vibrio succinogenes).